The following is a 382-amino-acid chain: MPMRIERDLHMAIGNGETSYTKNSRIQEKAMFQMKSVLEEATRAVCTTLLPQTMVVADLGCSSGPNTLRFVTEVTRIIAHHCKLEHNRRHDHLPQLQFFLNDLPGNDFNNLFQLIEQFNKSSTTHKGDAATEALQPPCYISGLPGSYYTRIFSSESVHLFHSLFCLQWRSQAPEQLKGTQKSCLDIYITKAMSPSMVKLFQQQFQKDFSLFLRLRYEELVSGGQMVLTFIGRKHEDVFTGESNHLYGLLAQSLKSLVDEGLVEKEKLESFYLPIYSPSVGEVEAIVKQLGLFNMNHVKVFEINWDPYDDSEGDDVHNSIESGENVAKCLRAVMEPLVASQFGERILDELFKEYARRVAKHLENEKTKHAVLVLSIEKAIIHV.

Positions 20, 61, 66, 102, 103, 146, and 147 each coordinate S-adenosyl-L-homocysteine. Glu-268 and Phe-270 together coordinate Mg(2+).

It belongs to the methyltransferase superfamily. Type-7 methyltransferase family. SABATH subfamily.

This Zea mays (Maize) protein is Inactive anthranilate O-methyltransferase 1 (AAMT1I).